The sequence spans 353 residues: DNA polymerase IV (353 aa).

The UmuC domain occupies 14 to 198 (IIHIDMDAFF…MDISKFHGVG (185 aa)). Mg(2+)-binding residues include D18 and D116. E117 is an active-site residue.

The protein belongs to the DNA polymerase type-Y family. As to quaternary structure, monomer. The cofactor is Mg(2+).

Its subcellular location is the cytoplasm. The catalysed reaction is DNA(n) + a 2'-deoxyribonucleoside 5'-triphosphate = DNA(n+1) + diphosphate. Poorly processive, error-prone DNA polymerase involved in untargeted mutagenesis. Copies undamaged DNA at stalled replication forks, which arise in vivo from mismatched or misaligned primer ends. These misaligned primers can be extended by PolIV. Exhibits no 3'-5' exonuclease (proofreading) activity. May be involved in translesional synthesis, in conjunction with the beta clamp from PolIII. This is DNA polymerase IV from Streptococcus pneumoniae serotype 4 (strain ATCC BAA-334 / TIGR4).